The sequence spans 522 residues: U4/U6 small nuclear ribonucleoprotein Prp4 (522 aa).

Polar residues predominate over residues 1 to 13; that stretch reads MASSRASSTQATK. The tract at residues 1–20 is disordered; the sequence is MASSRASSTQATKTKAPDDL. Lysine 27 carries the post-translational modification N6-acetyllysine. WD repeat units lie at residues 229 to 268, 271 to 318, 321 to 360, 363 to 402, 405 to 444, 447 to 487, and 490 to 521; these read GDDR…LLHT, GHNT…PVAD, GHTV…EILH, GHSM…CIMF, GHLK…CVYT, AHQN…PLKT, and GHEG…LWMA.

In terms of assembly, component of the precatalytic spliceosome (spliceosome B complex). Component of the U4/U6-U5 tri-snRNP complex, a building block of the precatalytic spliceosome (spliceosome B complex). The U4/U6-U5 tri-snRNP complex is composed of the U4, U6 and U5 snRNAs and at least PRPF3, PRPF4, PRPF6, PRPF8, PRPF31, SNRNP200, TXNL4A, SNRNP40, SNRPB, SNRPD1, SNRPD2, SNRPD3, SNRPE, SNRPF, SNRPG, DDX23, CD2BP2, PPIH, SNU13, EFTUD2, SART1 and USP39, plus LSM2, LSM3, LSM4, LSM5, LSM6, LSM7 and LSM8. Interacts directly with PRPF18, PPIH and PRPF3. Part of a heteromeric complex containing PPIH, PRPF3 and PRPF4 that is stable in the absence of RNA. Interacts with ERCC6.

The protein localises to the nucleus. It is found in the nucleus speckle. Its function is as follows. Plays a role in pre-mRNA splicing as component of the U4/U6-U5 tri-snRNP complex that is involved in spliceosome assembly, and as component of the precatalytic spliceosome (spliceosome B complex). The protein is U4/U6 small nuclear ribonucleoprotein Prp4 (PRPF4) of Homo sapiens (Human).